The chain runs to 702 residues: Protein crooked neck (702 aa).

13 HAT repeats span residues 56 to 88, 90 to 122, 124 to 156, 158 to 189, 191 to 222, 224 to 259, 261 to 295, 305 to 337, 339 to 373, 383 to 419, 454 to 486, 488 to 522, and 524 to 555; these read DYQQRKRKTFEDNLRKNRMVVSHWIKYAQWEEQ, QEIQRARSIWERALDNEHRNVTLWLKYAEMEMK, KQVNHARNLWDRAVTIMPRVNQFWYKYTYMEEM, ENVAGARQVFERWMEWQPEEQAWQTYVNFELR, KEIDRAREIYERFVYVHPDVKNWIKFARFEES, GFIHGSRRVFERAVEFFGDDYIEERLFIAFARFEEG, KEHDRARIIYKYALDHLPKDRTQELFKAYTKHEKK, VIVSKRKYQYEQEVAANPTNYDAWFDYLRLIEA, GDRDQIRETYERAISNVPPANEKNFWRRYIYLWIN, EDAERTRQIYKTCLELIPHKQFTFSKLWLLYAQFEIR, REFERCRMLYEKFLEFGPENCVTWMKFAELENL, GDTDRARAIFELAVQQPRLDMPELLWKAYIDFEVA, and GETELARQLYERLLERTQHVKVWMSFAKFEMG. The Nuclear localization signal motif lies at 620–628; that stretch reads PRRIKKRQK. The disordered stretch occupies residues 670–702; the sequence is KDNTVDDPPATAIASEPEPAADAAPADTTDSGD. Low complexity predominate over residues 683-702; that stretch reads ASEPEPAADAAPADTTDSGD.

The protein belongs to the crooked-neck family. In terms of assembly, colocalizes with a complex containing snRNP proteins. Transcribed in all cells during embryonic development.

Its subcellular location is the nucleus speckle. Functionally, may be involved in pre-mRNA splicing process. Involved in embryonic neurogenesis and cell rearrangement during Malpighian tubule morphogenesis. In Drosophila melanogaster (Fruit fly), this protein is Protein crooked neck (crn).